Consider the following 280-residue polypeptide: DNA repair protein RecO (280 aa).

Residues 261–280 (DMAHGNHTGQEDLPATASGA) form a disordered region.

Belongs to the RecO family.

Functionally, involved in DNA repair and RecF pathway recombination. This is DNA repair protein RecO from Mycolicibacterium smegmatis (strain ATCC 700084 / mc(2)155) (Mycobacterium smegmatis).